A 725-amino-acid polypeptide reads, in one-letter code: A-type inclusion protein A25 (725 aa).

Coiled coils occupy residues 418–521 (GNSG…RNGK) and 547–719 (EIDK…NAET). 4 tandem repeats follow at residues 609–635 (VRRELEEERRRVRDLESRLDECTRNQE), 636–663 (DTQEVDALRSRIRELENKLTDCIESGGG), 664–687 (NLTEISRLQSKISDLERQLSECRE), and 699–725 (ISDLERQLNDCRRNNETNAETERDATS). The segment at 609–718 (VRRELEEERR…CRRNNETNAE (110 aa)) is 4 X approximate tandem repeats.

The protein belongs to the poxviridae A25 protein family. Interacts (via N-terminus) with protein A26.

It is found in the virion. Functionally, structural protein that forms a matrix surrounding the mature virion (MV) through interaction with protein A26. Presence of protein A25 in the virion structurally prevents direct virus-cell fusion mechanism. This chain is A-type inclusion protein A25, found in Vaccinia virus (strain Western Reserve) (VACV).